Here is a 228-residue protein sequence, read N- to C-terminus: Ras-related protein Rab-32D (228 aa).

16–23 (GDVNVGKT) lines the GTP pocket. The short motif at 38-46 (YKSTIGADF) is the Effector region element. GTP contacts are provided by residues 64 to 68 (DTAGQ) and 128 to 131 (NKSD). The disordered stretch occupies residues 183–228 (SDNEQFNDSPDEETSSITLLGTSKKHDNTNPNKPSTSSPSSCFNCK). Positions 185–196 (NEQFNDSPDEET) are enriched in acidic residues. Residues 211–228 (TNPNKPSTSSPSSCFNCK) show a composition bias toward low complexity. A lipid anchor (S-geranylgeranyl cysteine) is attached at Cys224.

It belongs to the small GTPase superfamily. Rab family.

This Dictyostelium discoideum (Social amoeba) protein is Ras-related protein Rab-32D (rab32D).